The following is a 562-amino-acid chain: Bacillolysin (562 aa).

The first 24 residues, 1–24 (MKKKKQALKVLLSVGILSSSFAFA), serve as a signal peptide directing secretion. A propeptide spans 25 to 245 (HTSSAAPNNV…KQAAKPAAKP (221 aa)) (activation peptide). Ca(2+) is bound by residues Asp-303, Asp-305, and Asp-384. His-388 contacts Zn(2+). Glu-389 is a catalytic residue. Residues His-392 and Glu-412 each contribute to the Zn(2+) site. Residues Glu-423, Asn-429, Asp-431, Glu-433, Glu-436, Tyr-439, Thr-440, and Asp-446 each contribute to the Ca(2+) site. The active-site Proton donor is the His-477.

Belongs to the peptidase M4 family. Ca(2+) is required as a cofactor. It depends on Zn(2+) as a cofactor.

Its subcellular location is the secreted. It carries out the reaction Similar, but not identical, to that of thermolysin.. Extracellular zinc metalloprotease. The sequence is that of Bacillolysin (nprM) from Priestia megaterium (strain DSM 319 / IMG 1521) (Bacillus megaterium).